Reading from the N-terminus, the 475-residue chain is Splicing factor U2AF 65 kDa subunit (475 aa).

The disordered stretch occupies residues M1–K90. S2 carries the post-translational modification N-acetylserine. S2 carries the post-translational modification Phosphoserine. The interval S2 to D93 is required for interaction with PRPF19. Positions F7–N22 are enriched in basic and acidic residues. K15 carries the 5-hydroxylysine; by JMJD6; alternate modification. K15 participates in a covalent cross-link: Glycyl lysine isopeptide (Lys-Gly) (interchain with G-Cter in SUMO2); alternate. A necessary and sufficient to stimulate pre-mRNAs 3'-end cleavage in a CFIm complex-dependent manner region spans residues E17–R47. A compositionally biased stretch (basic residues) spans R23–R46. Residues R47–R56 are compositionally biased toward basic and acidic residues. K70 participates in a covalent cross-link: Glycyl lysine isopeptide (Lys-Gly) (interchain with G-Cter in SUMO2); alternate. K70 is modified (N6-acetyllysine; alternate). The residue at position 79 (S79) is a Phosphoserine. Basic residues predominate over residues S79–R89. 3 RRM domains span residues R149 to D231, H259 to V337, and L385 to P466. 5-hydroxylysine; by JMJD6 is present on K276. Residue S294 is modified to Phosphoserine.

It belongs to the splicing factor SR family. As to quaternary structure, interacts with U2AF1L4. Heterodimer with U2AF1. Binds unphosphorylated SF1. Interacts with SCAF11 and SNW1. Interacts with ZRSR2/U2AF1-RS2. Interacts with RBM17. Interacts with PRPF19; the interaction is direct. Interacts with POLR2A (via the C-terminal domain); recruits PRPF19 and the Prp19 complex to the pre-mRNA. Interacts with KHDC4 (Isoform 2). Interacts with ZRSR2. Interacts with the SF3B complex composed of SF3B1, SF3B2, SF3B3, SF3B4, SF3B5, SF3B6 and PHF5A. Interacts (via N-terminus) with CPSF7 (via C-terminus); this interaction stimulates pre-mRNA 3'-end processing by promoting the recruitment of the CFIm complex to cleavage and polyadenylation signals. Interacts with ARGLU1; interaction may be involved in ARGLU1-mediated modulation of alternative splicing. Post-translationally, lysyl-hydroxylation at Lys-15 and Lys-276 affects the mRNA splicing activity of the protein, leading to regulate some, but not all, alternative splicing events.

Its subcellular location is the nucleus. Its function is as follows. Plays a role in pre-mRNA splicing and 3'-end processing. By recruiting PRPF19 and the PRP19C/Prp19 complex/NTC/Nineteen complex to the RNA polymerase II C-terminal domain (CTD), and thereby pre-mRNA, may couple transcription to splicing. Induces cardiac troponin-T (TNNT2) pre-mRNA exon inclusion in muscle. Regulates the TNNT2 exon 5 inclusion through competition with MBNL1. Binds preferentially to a single-stranded structure within the polypyrimidine tract of TNNT2 intron 4 during spliceosome assembly. Required for the export of mRNA out of the nucleus, even if the mRNA is encoded by an intron-less gene. Represses the splicing of MAPT/Tau exon 10. Positively regulates pre-mRNA 3'-end processing by recruiting the CFIm complex to cleavage and polyadenylation signals. This is Splicing factor U2AF 65 kDa subunit (U2AF2) from Homo sapiens (Human).